Reading from the N-terminus, the 359-residue chain is Peptide chain release factor 1 (359 aa).

N5-methylglutamine is present on Gln236. The tract at residues 288 to 307 is disordered; sequence QDEQDAERKSTIGTGDRSER. The segment covering 293–307 has biased composition (basic and acidic residues); sequence AERKSTIGTGDRSER.

The protein belongs to the prokaryotic/mitochondrial release factor family. Post-translationally, methylated by PrmC. Methylation increases the termination efficiency of RF1.

It is found in the cytoplasm. Its function is as follows. Peptide chain release factor 1 directs the termination of translation in response to the peptide chain termination codons UAG and UAA. The protein is Peptide chain release factor 1 of Streptococcus sanguinis (strain SK36).